We begin with the raw amino-acid sequence, 318 residues long: tRNA pseudouridine synthase B (318 aa).

The active-site Nucleophile is D47.

The protein belongs to the pseudouridine synthase TruB family. Type 1 subfamily.

The enzyme catalyses uridine(55) in tRNA = pseudouridine(55) in tRNA. Its function is as follows. Responsible for synthesis of pseudouridine from uracil-55 in the psi GC loop of transfer RNAs. In Aliivibrio salmonicida (strain LFI1238) (Vibrio salmonicida (strain LFI1238)), this protein is tRNA pseudouridine synthase B.